The sequence spans 577 residues: Putative pseudouridine synthase B0024.11 (577 aa).

Catalysis depends on D188, which acts as the Nucleophile. A TRUD domain is found at 265–472 (GFINYFGTQR…GESSRCLFVE (208 aa)). Residues 538–565 (KAMRDASFKTRGDDEKTEENVLEEKGSD) are compositionally biased toward basic and acidic residues. Residues 538–577 (KAMRDASFKTRGDDEKTEENVLEEKGSDDANELNLVSEDQ) are disordered.

This sequence belongs to the pseudouridine synthase TruD family.

The catalysed reaction is a uridine in tRNA = a pseudouridine in tRNA. The chain is Putative pseudouridine synthase B0024.11 from Caenorhabditis elegans.